Reading from the N-terminus, the 290-residue chain is 4-diphosphocytidyl-2-C-methyl-D-erythritol kinase (290 aa).

Residue K14 is part of the active site. ATP is bound at residue 103–113 (PMGGGLGGGSS). Residue D145 is part of the active site.

Belongs to the GHMP kinase family. IspE subfamily. Homodimer.

The enzyme catalyses 4-CDP-2-C-methyl-D-erythritol + ATP = 4-CDP-2-C-methyl-D-erythritol 2-phosphate + ADP + H(+). It functions in the pathway isoprenoid biosynthesis; isopentenyl diphosphate biosynthesis via DXP pathway; isopentenyl diphosphate from 1-deoxy-D-xylulose 5-phosphate: step 3/6. Functionally, catalyzes the phosphorylation of the position 2 hydroxy group of 4-diphosphocytidyl-2C-methyl-D-erythritol. The protein is 4-diphosphocytidyl-2-C-methyl-D-erythritol kinase of Pectobacterium atrosepticum (strain SCRI 1043 / ATCC BAA-672) (Erwinia carotovora subsp. atroseptica).